An 85-amino-acid polypeptide reads, in one-letter code: Toxin TdNa8 (85 aa).

An N-terminal signal peptide occupies residues 1–19; the sequence is MNYLTLIAAASLLTAGTES. An LCN-type CS-alpha/beta domain is found at 21–81; that stretch reads KDGYPVKEGD…AAIKGYGRCR (61 aa). 4 cysteine pairs are disulfide-bonded: Cys-31/Cys-80, Cys-35/Cys-56, Cys-42/Cys-63, and Cys-46/Cys-65. A Proline amide modification is found at Pro-82.

Belongs to the long (4 C-C) scorpion toxin superfamily. Sodium channel inhibitor family. Alpha subfamily. As to expression, expressed by the venom gland.

It is found in the secreted. In terms of biological role, alpha toxins bind voltage-independently at site-3 of sodium channels (Nav) and inhibit the inactivation of the activated channels, thereby blocking neuronal transmission. This is Toxin TdNa8 from Tityus discrepans (Venezuelan scorpion).